Here is a 159-residue protein sequence, read N- to C-terminus: Urease accessory protein UreE (159 aa).

Belongs to the UreE family.

The protein resides in the cytoplasm. In terms of biological role, involved in urease metallocenter assembly. Binds nickel. Probably functions as a nickel donor during metallocenter assembly. The chain is Urease accessory protein UreE from Pseudomonas entomophila (strain L48).